We begin with the raw amino-acid sequence, 693 residues long: Polyribonucleotide nucleotidyltransferase (693 aa).

The Mg(2+) site is built by Asp-489 and Asp-495. Residues 556–615 (PQIHIMNVNPAKIKDVVGRGGSVVKGIVEKTGAQIDTSDSGEVKIFAKDKRSLDLAKSMV) enclose the KH domain. Residues 625–693 (GQIYKGKIVK…GRVKLSLVAR (69 aa)) form the S1 motif domain.

Belongs to the polyribonucleotide nucleotidyltransferase family. In terms of assembly, component of the RNA degradosome, which is a multiprotein complex involved in RNA processing and mRNA degradation. It depends on Mg(2+) as a cofactor.

It localises to the cytoplasm. It catalyses the reaction RNA(n+1) + phosphate = RNA(n) + a ribonucleoside 5'-diphosphate. Its function is as follows. Involved in mRNA degradation. Catalyzes the phosphorolysis of single-stranded polyribonucleotides processively in the 3'- to 5'-direction. The chain is Polyribonucleotide nucleotidyltransferase from Francisella philomiragia subsp. philomiragia (strain ATCC 25017 / CCUG 19701 / FSC 153 / O#319-036).